The sequence spans 221 residues: Oxaloacetate tautomerase FAHD1, mitochondrial (221 aa).

A mitochondrion-targeting transit peptide spans Met1 to Tyr24. Arg22 contacts oxalate. The residue at position 37 (Ser37) is a Phosphoserine. Positions 68, 70, and 99 each coordinate Mg(2+). N6-acetyllysine is present on Lys110. An N6-succinyllysine modification is found at Lys112. Oxalate is bound by residues Lys120 and Thr189.

The protein belongs to the FAH family. In terms of assembly, homodimer. It depends on Mg(2+) as a cofactor. The cofactor is Mn(2+). In terms of tissue distribution, ubiquitous (at protein level).

It is found in the mitochondrion. It localises to the cytoplasm. The protein resides in the cytosol. The catalysed reaction is oxaloacetate = enol-oxaloacetate. The enzyme catalyses oxaloacetate + H(+) = pyruvate + CO2. It catalyses the reaction a 3-acylpyruvate + H2O = a carboxylate + pyruvate + H(+). It carries out the reaction acetylpyruvate + H2O = acetate + pyruvate + H(+). The catalysed reaction is 3-fumarylpyruvate + H2O = fumarate + pyruvate + H(+). With respect to regulation, oxaloacetate decarboxylation is competitively inhibited by oxalate. Functionally, tautomerase that converts enol-oxaloacetate, a strong inhibitor of succinate dehydrogenase, to the physiological keto form of oxaloacetate. It is thereby required to maximize aerobic respiration efficiency by preventing succinate dehydrogenase inhibition. Also acts as a weak oxaloacetate decarboxylase (ODx), catalyzing the decarboxylation of oxaloacetate (OAA) to pyruvate and CO(2), and as such is likely a regulatory enzyme in the TCA cycle. Also displays acylpyruvase activity, being able to hydrolyze acetylpyruvate and fumarylpyruvate in vitro. Exhibits only a weak hydrolase activity on methylacetopyruvate and acetylacetone, and no activity toward acetoacetyl-CoA. The protein is Oxaloacetate tautomerase FAHD1, mitochondrial of Homo sapiens (Human).